The primary structure comprises 320 residues: Lipoyl synthase (320 aa).

A disordered region spans residues 1–26; sequence MVTVVDRVTSRRLRHPEKMHRPDTSI. [4Fe-4S] cluster contacts are provided by C59, C64, C70, C85, C89, C92, and S298. The Radical SAM core domain maps to 71–287; the sequence is WSQRHASFMI…AKIGKVKGFL (217 aa).

This sequence belongs to the radical SAM superfamily. Lipoyl synthase family. [4Fe-4S] cluster serves as cofactor.

It localises to the cytoplasm. The catalysed reaction is [[Fe-S] cluster scaffold protein carrying a second [4Fe-4S](2+) cluster] + N(6)-octanoyl-L-lysyl-[protein] + 2 oxidized [2Fe-2S]-[ferredoxin] + 2 S-adenosyl-L-methionine + 4 H(+) = [[Fe-S] cluster scaffold protein] + N(6)-[(R)-dihydrolipoyl]-L-lysyl-[protein] + 4 Fe(3+) + 2 hydrogen sulfide + 2 5'-deoxyadenosine + 2 L-methionine + 2 reduced [2Fe-2S]-[ferredoxin]. It functions in the pathway protein modification; protein lipoylation via endogenous pathway; protein N(6)-(lipoyl)lysine from octanoyl-[acyl-carrier-protein]: step 2/2. Functionally, catalyzes the radical-mediated insertion of two sulfur atoms into the C-6 and C-8 positions of the octanoyl moiety bound to the lipoyl domains of lipoate-dependent enzymes, thereby converting the octanoylated domains into lipoylated derivatives. This chain is Lipoyl synthase, found in Bartonella quintana (strain Toulouse) (Rochalimaea quintana).